The following is a 96-amino-acid chain: Protein RnfH (96 aa).

The protein belongs to the UPF0125 (RnfH) family.

The protein is Protein RnfH of Cronobacter sakazakii (strain ATCC BAA-894) (Enterobacter sakazakii).